Reading from the N-terminus, the 468-residue chain is Interleukin-6 receptor subunit alpha (468 aa).

Residues 1 to 19 form the signal peptide; sequence MLAVGCALLAALLAAPGAA. At 20–365 the chain is on the extracellular side; the sequence is LAPRRCPAQE…VQDSSSVPLP (346 aa). Disulfide bonds link Cys25–Cys193, Cys47–Cys96, Cys121–Cys132, and Cys165–Cys176. The region spanning 26 to 112 is the Ig-like C2-type domain; the sequence is PAQEVARGVL…AGTVHLLVDV (87 aa). Residues Asn55 and Asn93 are each glycosylated (N-linked (GlcNAc...) asparagine). Fibronectin type-III domains are found at residues 113-217 and 218-316; these read PPEE…LQPD and PPAN…TPWT. Asn221 and Asn245 each carry an N-linked (GlcNAc...) asparagine glycan. The short motif at 303-307 is the WSXWS motif element; that stretch reads WSEWS. Positions 303 to 328 are disordered; that stretch reads WSEWSPEAMGTPWTESRSPPAENEVS. Residue Asn350 is glycosylated (N-linked (GlcNAc...) asparagine). Thr352 is a glycosylation site (O-linked (GlcNAc) threonine). A helical transmembrane segment spans residues 366–386; it reads TFLVAGGSLAFGTLLCIAIVL. The Cytoplasmic portion of the chain corresponds to 387 to 468; it reads RFKKTWKLRA…ISNTDYFFPR (82 aa). A compositionally biased stretch (pro residues) spans 421–433; sequence TPVLVPLISPPVS. The segment at 421–468 is disordered; the sequence is TPVLVPLISPPVSPSSLGSDNTSSHNRPDARDPRSPYDISNTDYFFPR. The segment covering 446-455 has biased composition (basic and acidic residues); it reads NRPDARDPRS. The span at 458-468 shows a compositional bias: polar residues; sequence DISNTDYFFPR.

This sequence belongs to the type I cytokine receptor family. Type 3 subfamily. In terms of assembly, component of a hexamer of two molecules each of IL6, IL6R and IL6ST; first binds to IL6 to associate with the signaling subunit IL6ST. Interacts (via N-terminal ectodomain) with SORL1; this interaction may affect IL6-binding to IL6R, hence decrease IL6 'classic-signaling'. As to quaternary structure, also interacts with SORL1; this interaction leads to soluble IL6R internalization. May form a trimeric complex with the soluble SORL1 ectodomain and circulating IL6 receptor; this interaction might stabilize circulating IL6, hence promote IL6 'trans-signaling,. A short soluble form is released from the membrane by proteolysis. The sIL6R is formed mostly by limited proteolysis of membrane-bound receptors, a process referred to as ectodomain shedding, but is also directly secreted from the cells after alternative mRNA splicing. mIL6R is cleaved by the proteases ADAM10 and ADAM17. In terms of processing, glycosylated. Glycosylation is dispensable for transport, signaling, and cell-surface turnover. Glycosylation at Asn-55 is a protease-regulatory exosite. Glycosylation is required for ADAM17-mediated proteolysis. In terms of tissue distribution, expressed in peripheral blood mononuclear cells and weakly found in urine and serum. 1%-20% of the total sIL6R in plasma is generated by alternative splicing.

The protein resides in the cell membrane. Its subcellular location is the secreted. With respect to regulation, classic and trans-signaling are both inhibited by tocilizumab, a humanized monoclonal antibody that blocks interleukin IL6R signaling. In terms of biological role, part of the receptor for interleukin 6. Binds to IL6 with low affinity, but does not transduce a signal. Signal activation necessitate an association with IL6ST. Activation leads to the regulation of the immune response, acute-phase reactions and hematopoiesis. The interaction with membrane-bound IL6R and IL6ST stimulates 'classic signaling', the restricted expression of the IL6R limits classic IL6 signaling to only a few tissues such as the liver and some cells of the immune system. Whereas the binding of IL6 and soluble IL6R to IL6ST stimulates 'trans-signaling'. Alternatively, 'cluster signaling' occurs when membrane-bound IL6:IL6R complexes on transmitter cells activate IL6ST receptors on neighboring receiver cells. Its function is as follows. Signaling via the membrane-bound IL6R is mostly regenerative and anti-inflammatory. Drives naive CD4(+) T cells to the Th17 lineage, through 'cluster signaling' by dendritic cells. Soluble form of IL6 receptor (sIL6R) that acts as an agonist of IL6 activity. The IL6:sIL6R complex (hyper-IL6) binds to IL6ST/gp130 on cell surfaces and induces signaling also on cells that do not express membrane-bound IL6R in a process called IL6 'trans-signaling'. sIL6R is causative for the pro-inflammatory properties of IL6 and an important player in the development of chronic inflammatory diseases. In complex with IL6, is required for induction of VEGF production. Plays a protective role during liver injury, being required for maintenance of tissue regeneration. 'Trans-signaling' in central nervous system regulates energy and glucose homeostasis. This Homo sapiens (Human) protein is Interleukin-6 receptor subunit alpha.